The following is a 377-amino-acid chain: MNKHTTLPNLMQKLVSDEEIQLIAEAVGYRDSSRTFTLRELIHFFLLAAMHQWKSFRHGADVGPLYGLPRFHYSTVSKKAKEVPYDIMKRLLALIISKCNRQTRRSLRFPKPLRVVDSTTVTVGKNRLPWAPYHGERAGVKLHVAYSPEFSLPADVVETTGLRHDGPVGEQLTNAQQVLVEDRAYFKIERLDRFVEQHQLFVIRMKDNIELHQKKSLNRLSSTSSSVQTDFTCQLGTKQCRSTKRHRVVIFRDANGRDIRVVTNLFHASAETIADMYQQRWAVEVFFRWVKQYLNVPTLFGTTENAVYNQLFAAFIAYVLLRWLYDQTKKQTNVSLSFISFVRRFFSGQLPLDWKSGMAAALFEYAQIYGRRMYNFG.

This sequence belongs to the transposase 11 family.

In Geobacillus stearothermophilus (Bacillus stearothermophilus), this protein is Probable transposase for insertion sequence element IS5377.